The primary structure comprises 164 residues: V-type proton ATPase 16 kDa proteolipid subunit (164 aa).

Topologically, residues 1-9 (MSNFAGDET) are lumenal. A helical membrane pass occupies residues 10 to 32 (APFFGFLGAAAALVFSCMGAAYG). Topologically, residues 33–54 (TAKSGVGVASMGVMRPELVMKS) are cytoplasmic. The chain crosses the membrane as a helical span at residues 55 to 75 (IVPVVMAGVLGIYGLIIAVII). Topologically, residues 76–94 (STGINPKTKSYYLFDGYAH) are lumenal. A helical transmembrane segment spans residues 95-116 (LSSGLACGLAGLSAGMAIGIVG). At 117–128 (DAGVRANAQQPK) the chain is on the cytoplasmic side. A helical membrane pass occupies residues 129 to 154 (LFVGMILILIFAEALALYGLIVGIIL). Residues 155-164 (SSRAGQSRAE) lie on the Lumenal side of the membrane.

The protein belongs to the V-ATPase proteolipid subunit family. In terms of assembly, V-ATPase is a heteromultimeric enzyme composed of a peripheral catalytic V1 complex (main components: subunits A, B, C, D, E, and F) attached to an integral membrane V0 proton pore complex (main component: the proteolipid protein; which is present as a hexamer that forms the proton-conducting pore).

Its subcellular location is the vacuole membrane. Its function is as follows. Proton-conducting pore forming subunit of the membrane integral V0 complex of vacuolar ATPase. V-ATPase is responsible for acidifying a variety of intracellular compartments in eukaryotic cells. The chain is V-type proton ATPase 16 kDa proteolipid subunit from Solanum lycopersicum (Tomato).